Here is an 815-residue protein sequence, read N- to C-terminus: Probable disease resistance protein At5g66910 (815 aa).

Positions 1-150 (MVVVDWLGLG…NINKKLDRLS (150 aa)) constitute an RPW8 domain. NB-ARC domains lie at 156–283 (PLVS…DVWQ) and 341–440 (SPDE…DIWM). 196-203 (GPPGCGKT) is an ATP binding site. LRR repeat units follow at residues 656–678 (NLQEIDIDYCYDLDELPYWIPEV), 680–702 (SLKTLSITNCNKLSQLPEAIGNL), 704–726 (RLEVLRMCSCMNLSELPEATERL), and 728–750 (NLRSLDISHCLGLRKLPQEIGKL).

It belongs to the disease resistance NB-LRR family.

Its function is as follows. Probable disease resistance protein. In Arabidopsis thaliana (Mouse-ear cress), this protein is Probable disease resistance protein At5g66910.